The chain runs to 418 residues: Actin-related protein 3 (418 aa).

It belongs to the actin family. ARP3 subfamily. Component of the Arp2/3 complex.

The protein resides in the cytoplasm. Its subcellular location is the cytoskeleton. Functions as ATP-binding component of the Arp2/3 complex which is involved in regulation of actin polymerization and together with an activating nucleation-promoting factor (NPF) mediates the formation of branched actin networks. Seems to contact the pointed end of the daughter actin filament. Required during embryogenesis for the developmental migration of tail hemocytes anteriorly, along the ventral midline. The sequence is that of Actin-related protein 3 from Drosophila melanogaster (Fruit fly).